We begin with the raw amino-acid sequence, 530 residues long: C2H2-type transcription factor MSN2 (530 aa).

2 C2H2-type zinc fingers span residues 409–432 (FVCDLCNRRFRRQEHLKRHYRSLH) and 438–460 (FECNECGKKFSRSDNLAQHARTH).

The protein localises to the nucleus. It is found in the cytoplasm. Functionally, transcription factor that acts as a key downstream transcription factor in the HOG1-MAPK pathway. Plays crucial roles in the regulation of conidiation, virulence and multi-stress responses. In addition to regulating the expression of genes specifically involved in stress-response, conidiation and virulence, controls also expression of cellular signaling factors. The sequence is that of C2H2-type transcription factor MSN2 from Metarhizium robertsii (strain ARSEF 23 / ATCC MYA-3075) (Metarhizium anisopliae (strain ARSEF 23)).